The sequence spans 420 residues: Glucose-1-phosphate adenylyltransferase (420 aa).

Alpha-D-glucose 1-phosphate-binding positions include tyrosine 107, glycine 173, glutamate 188–lysine 189, and serine 206.

It belongs to the bacterial/plant glucose-1-phosphate adenylyltransferase family. In terms of assembly, homotetramer.

It carries out the reaction alpha-D-glucose 1-phosphate + ATP + H(+) = ADP-alpha-D-glucose + diphosphate. It participates in glycan biosynthesis; glycogen biosynthesis. Functionally, involved in the biosynthesis of ADP-glucose, a building block required for the elongation reactions to produce glycogen. Catalyzes the reaction between ATP and alpha-D-glucose 1-phosphate (G1P) to produce pyrophosphate and ADP-Glc. The sequence is that of Glucose-1-phosphate adenylyltransferase from Shewanella oneidensis (strain ATCC 700550 / JCM 31522 / CIP 106686 / LMG 19005 / NCIMB 14063 / MR-1).